Here is a 395-residue protein sequence, read N- to C-terminus: Zinc-regulated GTPase metalloprotein activator 1E (395 aa).

Positions Met-1 to Leu-22 are disordered. Acidic residues predominate over residues Val-8–Pro-20. Positions Glu-17–Pro-24 match the psi-PxLVp motif motif. A GTP-binding site is contributed by Gly-49–Thr-56. The Zn(2+) site is built by Cys-107, Cys-109, and Cys-110. Residues Cys-107–Cys-110 carry the CXCC motif motif. Residues Cys-110 to Asp-114 and Asn-203 to Asp-206 contribute to the GTP site. In terms of domain architecture, CobW C-terminal spans Ile-274–Val-377.

It belongs to the SIMIBI class G3E GTPase family. ZNG1 subfamily.

It is found in the nucleus. It carries out the reaction GTP + H2O = GDP + phosphate + H(+). Its function is as follows. Zinc chaperone that directly transfers zinc cofactor to target metalloproteins, thereby activating them. Catalyzes zinc insertion into the active site of methionine aminopeptidase METAP1, which function to cleave the initiator methionine from polypeptides during or after protein translation. Mechanistically, the N-terminal psi-PxLVp motif binds to the C6H2-type zinc finger of inactive form of METAP1. After formation of the docked complex, zinc is transferred from the CXCC motif in the GTPase domain of ZNG1E to the zinc binding site in the peptidase domain of METAP1 in a process requiring GTP hydrolysis. GTP/GDP exchange is required for release of active METAP1. The chain is Zinc-regulated GTPase metalloprotein activator 1E from Homo sapiens (Human).